The chain runs to 448 residues: CCA-adding enzyme (448 aa).

ATP contacts are provided by Ser-52 and Lys-55. The CTP site is built by Ser-52 and Lys-55. Positions 64, 66, and 118 each coordinate Mg(2+). 3 residues coordinate ATP: His-141, Lys-160, and Tyr-169. Residues His-141, Lys-160, and Tyr-169 each coordinate CTP.

The protein belongs to the tRNA nucleotidyltransferase/poly(A) polymerase family. Archaeal CCA-adding enzyme subfamily. As to quaternary structure, homodimer. Mg(2+) serves as cofactor.

It catalyses the reaction a tRNA precursor + 2 CTP + ATP = a tRNA with a 3' CCA end + 3 diphosphate. The enzyme catalyses a tRNA with a 3' CCA end + 2 CTP + ATP = a tRNA with a 3' CCACCA end + 3 diphosphate. In terms of biological role, catalyzes the addition and repair of the essential 3'-terminal CCA sequence in tRNAs without using a nucleic acid template. Adds these three nucleotides in the order of C, C, and A to the tRNA nucleotide-73, using CTP and ATP as substrates and producing inorganic pyrophosphate. tRNA 3'-terminal CCA addition is required both for tRNA processing and repair. Also involved in tRNA surveillance by mediating tandem CCA addition to generate a CCACCA at the 3' terminus of unstable tRNAs. While stable tRNAs receive only 3'-terminal CCA, unstable tRNAs are marked with CCACCA and rapidly degraded. The protein is CCA-adding enzyme of Pyrococcus abyssi (strain GE5 / Orsay).